Consider the following 269-residue polypeptide: Putative pyruvate, phosphate dikinase regulatory protein (269 aa).

ADP is bound at residue 151–158; sequence GVSRSSKT.

This sequence belongs to the pyruvate, phosphate/water dikinase regulatory protein family. PDRP subfamily.

The catalysed reaction is N(tele)-phospho-L-histidyl/L-threonyl-[pyruvate, phosphate dikinase] + ADP = N(tele)-phospho-L-histidyl/O-phospho-L-threonyl-[pyruvate, phosphate dikinase] + AMP + H(+). The enzyme catalyses N(tele)-phospho-L-histidyl/O-phospho-L-threonyl-[pyruvate, phosphate dikinase] + phosphate + H(+) = N(tele)-phospho-L-histidyl/L-threonyl-[pyruvate, phosphate dikinase] + diphosphate. Its function is as follows. Bifunctional serine/threonine kinase and phosphorylase involved in the regulation of the pyruvate, phosphate dikinase (PPDK) by catalyzing its phosphorylation/dephosphorylation. This chain is Putative pyruvate, phosphate dikinase regulatory protein, found in Geobacter metallireducens (strain ATCC 53774 / DSM 7210 / GS-15).